The chain runs to 181 residues: CDP-diacylglycerol--glycerol-3-phosphate 3-phosphatidyltransferase (181 aa).

The next 4 helical transmembrane spans lie at 8–28 (PNYL…AFYI), 35–55 (KLGA…GYIA), 64–84 (FGKM…IIML), and 148–168 (IIYL…LTII).

Belongs to the CDP-alcohol phosphatidyltransferase class-I family.

The protein localises to the cell membrane. It carries out the reaction a CDP-1,2-diacyl-sn-glycerol + sn-glycerol 3-phosphate = a 1,2-diacyl-sn-glycero-3-phospho-(1'-sn-glycero-3'-phosphate) + CMP + H(+). Its pathway is phospholipid metabolism; phosphatidylglycerol biosynthesis; phosphatidylglycerol from CDP-diacylglycerol: step 1/2. Its function is as follows. This protein catalyzes the committed step to the synthesis of the acidic phospholipids. This Rickettsia felis (strain ATCC VR-1525 / URRWXCal2) (Rickettsia azadi) protein is CDP-diacylglycerol--glycerol-3-phosphate 3-phosphatidyltransferase (pgsA).